We begin with the raw amino-acid sequence, 177 residues long: Large ribosomal subunit protein uL6 (177 aa).

This sequence belongs to the universal ribosomal protein uL6 family. Part of the 50S ribosomal subunit.

Functionally, this protein binds to the 23S rRNA, and is important in its secondary structure. It is located near the subunit interface in the base of the L7/L12 stalk, and near the tRNA binding site of the peptidyltransferase center. In Magnetococcus marinus (strain ATCC BAA-1437 / JCM 17883 / MC-1), this protein is Large ribosomal subunit protein uL6.